A 418-amino-acid chain; its full sequence is Glutamyl-tRNA reductase (418 aa).

Residues 49 to 52, serine 106, 111 to 113, and glutamine 117 contribute to the substrate site; these read TCNR and EPQ. Cysteine 50 serves as the catalytic Nucleophile. 186 to 191 contacts NADP(+); it reads GAGEMI.

Belongs to the glutamyl-tRNA reductase family. Homodimer.

The catalysed reaction is (S)-4-amino-5-oxopentanoate + tRNA(Glu) + NADP(+) = L-glutamyl-tRNA(Glu) + NADPH + H(+). Its pathway is porphyrin-containing compound metabolism; protoporphyrin-IX biosynthesis; 5-aminolevulinate from L-glutamyl-tRNA(Glu): step 1/2. In terms of biological role, catalyzes the NADPH-dependent reduction of glutamyl-tRNA(Glu) to glutamate 1-semialdehyde (GSA). This is Glutamyl-tRNA reductase from Alcanivorax borkumensis (strain ATCC 700651 / DSM 11573 / NCIMB 13689 / SK2).